The following is a 202-amino-acid chain: MAIWRGSEPLILASQSRVRQLLLANAGLPFETMPAAIDERAVQRSSGLTTAGEIAVRLACEKAREVSSRSPGRYVIGADQTLECDGRLLNKPAGRADAGAHLRALSGRTHALHAGVAVVRDGRLMFENVSVARMTMRELSEDTIESYLDAAGDAASASVGAYQLEGLGIHLFSRIEGDHFTILGLPLLPLLAYLRSQWLLSL.

Asp79 acts as the Proton acceptor in catalysis.

Belongs to the Maf family. It depends on a divalent metal cation as a cofactor.

It localises to the cytoplasm. The catalysed reaction is a ribonucleoside 5'-triphosphate + H2O = a ribonucleoside 5'-phosphate + diphosphate + H(+). It carries out the reaction a 2'-deoxyribonucleoside 5'-triphosphate + H2O = a 2'-deoxyribonucleoside 5'-phosphate + diphosphate + H(+). Nucleoside triphosphate pyrophosphatase. May have a dual role in cell division arrest and in preventing the incorporation of modified nucleotides into cellular nucleic acids. In Nitrobacter winogradskyi (strain ATCC 25391 / DSM 10237 / CIP 104748 / NCIMB 11846 / Nb-255), this protein is Nucleoside triphosphate pyrophosphatase.